We begin with the raw amino-acid sequence, 101 residues long: Small ribosomal subunit protein uS14 (101 aa).

The tract at residues 53–72 (RDAAAVRVRNRDSHDGRPRG) is disordered. Basic and acidic residues predominate over residues 61–70 (RNRDSHDGRP).

This sequence belongs to the universal ribosomal protein uS14 family. As to quaternary structure, part of the 30S ribosomal subunit. Contacts proteins S3 and S10.

Functionally, binds 16S rRNA, required for the assembly of 30S particles and may also be responsible for determining the conformation of the 16S rRNA at the A site. The chain is Small ribosomal subunit protein uS14 from Corynebacterium glutamicum (strain R).